Here is a 304-residue protein sequence, read N- to C-terminus: uncharacterized protein (304 aa).

The span at 1–10 (MLWAHRKKRK) shows a compositional bias: basic residues. Residues 1–28 (MLWAHRKKRKAATETTEDKPLESHRAND) form a disordered region. Residues 16–27 (TEDKPLESHRAN) show a composition bias toward basic and acidic residues. A Phosphoserine modification is found at S39. A compositionally biased stretch (polar residues) spans 91–101 (KQKISGSSMTK). Disordered stretches follow at residues 91–115 (KQKI…SMED), 138–160 (SMLQ…ISPE), and 190–304 (SHTV…IYGS). Residues 151–160 (HAESRNISPE) are compositionally biased toward basic and acidic residues. S158 bears the Phosphoserine mark. The segment covering 195–206 (SQSRHSNQSHHS) has biased composition (low complexity). The span at 208-223 (PSHQSNQSHPVYSSYQ) shows a compositional bias: polar residues. A compositionally biased stretch (low complexity) spans 229-248 (HLSPQSYPSYSSHQSHPGHS). The span at 249–263 (NHQGHSGLSSHQTHL) shows a compositional bias: polar residues. A compositionally biased stretch (low complexity) spans 264–292 (GHSNHQGHPGHSSHQSHQGQPGHPSHQSH).

This is an uncharacterized protein from Mus musculus (Mouse).